The chain runs to 210 residues: Cell division protein SepF (210 aa).

2 disordered regions span residues 22-72 and 79-98; these read DYYE…FDDA and RGPR…RGST. Basic and acidic residues-rich tracts occupy residues 37–60 and 79–88; these read RPRE…REYD and RGPREFDRTP.

The protein belongs to the SepF family. In terms of assembly, homodimer. Interacts with FtsZ.

The protein resides in the cytoplasm. Functionally, cell division protein that is part of the divisome complex and is recruited early to the Z-ring. Probably stimulates Z-ring formation, perhaps through the cross-linking of FtsZ protofilaments. Its function overlaps with FtsA. The protein is Cell division protein SepF of Mycolicibacterium vanbaalenii (strain DSM 7251 / JCM 13017 / BCRC 16820 / KCTC 9966 / NRRL B-24157 / PYR-1) (Mycobacterium vanbaalenii).